A 149-amino-acid chain; its full sequence is Nucleoside deoxyribosyltransferase (149 aa).

Catalysis depends on Glu-90, which acts as the Nucleophile.

The protein belongs to the nucleoside deoxyribosyltransferase family.

The catalysed reaction is 2-deoxy-D-ribosyl-base(1) + base(2) = 2-deoxy-D-ribosyl-base(2) + base(1).. The protein operates within nucleotide metabolism; nucleotide salvage pathway. Its function is as follows. Catalyzes the cleavage of the glycosidic bond of 2'-deoxyribonucleosides and the transfer of the deoxyribosyl moiety to an acceptor purine or pyrimidine base. This is Nucleoside deoxyribosyltransferase (ntd) from Lactobacillus johnsonii (strain CNCM I-12250 / La1 / NCC 533).